The chain runs to 526 residues: NAD(P)H-quinone oxidoreductase chain 4 2 (526 aa).

Transmembrane regions (helical) follow at residues 6–26 (FPWLSTIILFPIIAALFLPLI), 36–56 (WYALTIGLIDFVIIVTAFYTG), 91–111 (LILLTGFITTLAILAAWPVSF), 113–133 (PKLFYFLMLLMYGGQIAVFAV), 137–157 (LLFFFTWELELVPVYLILSIW), 169–189 (FILYTAGGSLFILIAALTMAF), 212–232 (LLLYGGLLIAYGVKLPIFPLH), 243–263 (TAPAHMLLAGILLKMGGYALL), 275–295 (ALFGPVLVILGVVNIVYAALT), 306–326 (IAYSSISHMGFVLIGMASFTD), 332–352 (AMLQMISHGLIGASLFFMVGA), 375–397 (IFAMWTTCSMASLALPGMSGFVA), 417–437 (VIIVFLAAVGVILTPIYLLSM), and 464–484 (VFVIACLLIPIIGIGLYPKAV).

The protein belongs to the complex I subunit 4 family.

Its subcellular location is the cellular thylakoid membrane. It catalyses the reaction a plastoquinone + NADH + (n+1) H(+)(in) = a plastoquinol + NAD(+) + n H(+)(out). The catalysed reaction is a plastoquinone + NADPH + (n+1) H(+)(in) = a plastoquinol + NADP(+) + n H(+)(out). Functionally, NDH-1 shuttles electrons from NAD(P)H, via FMN and iron-sulfur (Fe-S) centers, to quinones in the respiratory chain. The immediate electron acceptor for the enzyme in this species is believed to be plastoquinone. Couples the redox reaction to proton translocation (for every two electrons transferred, four hydrogen ions are translocated across the cytoplasmic membrane), and thus conserves the redox energy in a proton gradient. In Picosynechococcus sp. (strain ATCC 27264 / PCC 7002 / PR-6) (Agmenellum quadruplicatum), this protein is NAD(P)H-quinone oxidoreductase chain 4 2.